Here is a 357-residue protein sequence, read N- to C-terminus: MKKYLLLALLPFLYACSNSSNQGINYDEAFAKDTQGLDILTGQFSHNIDRIWGVNELLVASRKDYVKYTDSFYTRSHVSFDEGNIVIETQQDLNRLHNAIVHTLLMGADAKGIDLFTSGDVPISSRPFLLGQVVDHQGQQIANQVIASNFATYLIQNKLQTRRLQNGHTVQFVSVPMIANHVEVRARKYLPLIRKAAQRYGIDESLILGIMQTESSFNPYAISYANAIGLMQVVPHTAGRDVFAMKGKGGQPSTRYLYDPANNIDAGVSYLWILQNQYLDGITNPTSKRFAMISAYNSGAGAVLRVFDNDKDTAIYKINQMYPEQVYRILTTVHPSSQARNYLLKVDKAQKKFRVRR.

An N-terminal signal peptide occupies residues Met1–Ala15. Cys16 carries the N-palmitoyl cysteine lipid modification. The S-diacylglycerol cysteine moiety is linked to residue Cys16.

This sequence belongs to the transglycosylase Slt family.

The protein localises to the cell outer membrane. It catalyses the reaction Exolytic cleavage of the (1-&gt;4)-beta-glycosidic linkage between N-acetylmuramic acid (MurNAc) and N-acetylglucosamine (GlcNAc) residues in peptidoglycan, from either the reducing or the non-reducing ends of the peptidoglycan chains, with concomitant formation of a 1,6-anhydrobond in the MurNAc residue.. Its function is as follows. Murein-degrading enzyme. May play a role in recycling of muropeptides during cell elongation and/or cell division. In Haemophilus influenzae (strain 86-028NP), this protein is Membrane-bound lytic murein transglycosylase C.